The primary structure comprises 141 residues: Protein X (141 aa).

The interval 24–52 (QSSGPPFPRPAAGSAASSTSSPSPSDESD) is disordered. Low complexity predominate over residues 33–48 (PAAGSAASSTSSPSPS). A mitochondrial targeting sequence region spans residues 68 to 113 (PCCLVFTCADLRTMDSTVNFVSWHAKRQLGMPSKDLWTPYIKDQLL).

This sequence belongs to the orthohepadnavirus protein X family. As to quaternary structure, may form homodimer. May interact with host CEBPA, CFLAR, CREB1, DDB1, E4F1, HBXIP, HSPD1/HSP60, NFKBIA, POLR2E and SMAD4. Interacts with host SMC5-SMC6 complex and induces its degradation. Interacts with host TRPC4AP; leading to prevent ubiquitination of TRPC4AP. Interacts with host PLSCR1; this interaction promotes ubiquitination and degradation of HBx and impairs HBx-mediated cell proliferation. In terms of processing, a fraction may be phosphorylated in insect cells and HepG2 cells, a human hepatoblastoma cell line. Phosphorylated in vitro by host protein kinase C or mitogen-activated protein kinase. N-acetylated in insect cells.

The protein localises to the host cytoplasm. It localises to the host nucleus. It is found in the host mitochondrion. In terms of biological role, multifunctional protein that plays a role in silencing host antiviral defenses and promoting viral transcription. Does not seem to be essential for HBV infection. May be directly involved in development of cirrhosis and liver cancer (hepatocellular carcinoma). Most of cytosolic activities involve modulation of cytosolic calcium. The effect on apoptosis is controversial depending on the cell types in which the studies have been conducted. May induce apoptosis by localizing in mitochondria and causing loss of mitochondrial membrane potential. May also modulate apoptosis by binding host CFLAR, a key regulator of the death-inducing signaling complex (DISC). Promotes viral transcription by using the host E3 ubiquitin ligase DDB1 to target the SMC5-SMC6 complex to proteasomal degradation. This host complex would otherwise bind to viral episomal DNA, and prevents its transcription. Moderately stimulates transcription of many different viral and cellular transcription elements. Promoters and enhancers stimulated by HBx contain DNA binding sites for NF-kappa-B, AP-1, AP-2, c-EBP, ATF/CREB, or the calcium-activated factor NF-AT. The chain is Protein X from Marmota monax (Woodchuck).